We begin with the raw amino-acid sequence, 577 residues long: Hemagglutinin-neuraminidase (577 aa).

Over 1–22 (MDRAVSQVALENDEREAKNTWR) the chain is Intravirion. A helical transmembrane segment spans residues 23–45 (LIFRIAILLLTVVTLATSVASLV). Residues 46–571 (YSMGASTPSD…LVEILKNDGV (526 aa)) are Virion surface-facing. Asn-119 and Asn-144 each carry an N-linked (GlcNAc...) asparagine; by host glycan. The segment at 124–152 (GAPIHDPDFIGGIGKELIVDNASDVTSFY) is important for interaction with fusion/F protein. Cystine bridges form between Cys-172-Cys-196, Cys-186-Cys-247, and Cys-238-Cys-251. The involved in neuraminidase activity stretch occupies residues 234–239 (NRKSCS). 2 N-linked (GlcNAc...) asparagine; by host glycosylation sites follow: Asn-341 and Asn-433. Intrachain disulfides connect Cys-344/Cys-461 and Cys-455/Cys-465. N-linked (GlcNAc...) asparagine; by host glycans are attached at residues Asn-481 and Asn-538. Cys-531 and Cys-542 are oxidised to a cystine.

It belongs to the paramyxoviruses hemagglutinin-neuraminidase family. Homotetramer; composed of disulfide-linked homodimers. Interacts with F protein trimer. Interacts with host CG-1B; this interaction inhibits viral adsorption and replication rather than internalization.

The protein localises to the virion membrane. It localises to the host cell membrane. It carries out the reaction Hydrolysis of alpha-(2-&gt;3)-, alpha-(2-&gt;6)-, alpha-(2-&gt;8)- glycosidic linkages of terminal sialic acid residues in oligosaccharides, glycoproteins, glycolipids, colominic acid and synthetic substrates.. Functionally, mediates the viral entry into the host cell together with fusion/F protein. Attaches the virus to sialic acid-containing cell receptors and thereby initiates infection. Binding of HN protein to the receptor induces a conformational change that allows the F protein to trigger virion/cell membranes fusion. Neuraminidase activity ensures the efficient spread of the virus by dissociating the mature virions from the neuraminic acid containing glycoproteins. The chain is Hemagglutinin-neuraminidase (HN) from Gallus gallus (Chicken).